Consider the following 156-residue polypeptide: ATP synthase subunit b 2 (156 aa).

Residues 7 to 29 (LLGQAISFAIFVWFCMKYVWPPV) form a helical membrane-spanning segment.

The protein belongs to the ATPase B chain family. In terms of assembly, F-type ATPases have 2 components, F(1) - the catalytic core - and F(0) - the membrane proton channel. F(1) has five subunits: alpha(3), beta(3), gamma(1), delta(1), epsilon(1). F(0) has three main subunits: a(1), b(2) and c(10-14). The alpha and beta chains form an alternating ring which encloses part of the gamma chain. F(1) is attached to F(0) by a central stalk formed by the gamma and epsilon chains, while a peripheral stalk is formed by the delta and b chains.

It is found in the cell inner membrane. Functionally, f(1)F(0) ATP synthase produces ATP from ADP in the presence of a proton or sodium gradient. F-type ATPases consist of two structural domains, F(1) containing the extramembraneous catalytic core and F(0) containing the membrane proton channel, linked together by a central stalk and a peripheral stalk. During catalysis, ATP synthesis in the catalytic domain of F(1) is coupled via a rotary mechanism of the central stalk subunits to proton translocation. Component of the F(0) channel, it forms part of the peripheral stalk, linking F(1) to F(0). The sequence is that of ATP synthase subunit b 2 from Marinomonas sp. (strain MWYL1).